We begin with the raw amino-acid sequence, 311 residues long: Thioredoxin reductase (311 aa).

33 to 43 contributes to the FAD binding site; the sequence is EGFFSGISGGQ. Cysteines 138 and 141 form a disulfide. 283–292 provides a ligand contact to FAD; the sequence is DVQDKYYRQA.

It belongs to the class-II pyridine nucleotide-disulfide oxidoreductase family. Homodimer. FAD serves as cofactor.

It is found in the cytoplasm. The catalysed reaction is [thioredoxin]-dithiol + NADP(+) = [thioredoxin]-disulfide + NADPH + H(+). This Chlamydia pneumoniae (Chlamydophila pneumoniae) protein is Thioredoxin reductase (trxB).